The sequence spans 71 residues: MGRVKPKYIKSLARRLLETYPDKFTDSFEENKKAVAQLADIPSKTVRNKVAGYITRLVKRLKTQEKTESAA.

This sequence belongs to the eukaryotic ribosomal protein eS17 family.

This chain is Small ribosomal subunit protein eS17, found in Pyrobaculum islandicum (strain DSM 4184 / JCM 9189 / GEO3).